A 362-amino-acid polypeptide reads, in one-letter code: Chorismate synthase (362 aa).

NADP(+) is bound at residue arginine 47. FMN-binding positions include 124 to 126, glycine 286, 301 to 305, and arginine 327; these read RSS and KPTAT.

It belongs to the chorismate synthase family. In terms of assembly, homotetramer. FMNH2 serves as cofactor.

It catalyses the reaction 5-O-(1-carboxyvinyl)-3-phosphoshikimate = chorismate + phosphate. It functions in the pathway metabolic intermediate biosynthesis; chorismate biosynthesis; chorismate from D-erythrose 4-phosphate and phosphoenolpyruvate: step 7/7. Catalyzes the anti-1,4-elimination of the C-3 phosphate and the C-6 proR hydrogen from 5-enolpyruvylshikimate-3-phosphate (EPSP) to yield chorismate, which is the branch point compound that serves as the starting substrate for the three terminal pathways of aromatic amino acid biosynthesis. This reaction introduces a second double bond into the aromatic ring system. This Trichormus variabilis (strain ATCC 29413 / PCC 7937) (Anabaena variabilis) protein is Chorismate synthase.